The primary structure comprises 317 residues: Tegument protein UL14 homolog (317 aa).

Positions 166-291 (IAADPHSPRS…QKWLGGIPPL (126 aa)) are disordered. The segment covering 182–195 (KAPEDARCGARKPG) has biased composition (basic and acidic residues). Over residues 198–211 (NNYTPSAQPRSQET) the composition is skewed to polar residues. Composition is skewed to basic and acidic residues over residues 217-236 (ASPDEGTRLGDRTRDLEHHS) and 249-265 (SERRRLGVVHQREKSSE).

The protein belongs to the alphaherpesvirinae HHV-1 UL14 protein family.

The protein resides in the virion tegument. Its subcellular location is the host cytoplasm. It is found in the host nucleus. In terms of biological role, contributes to the nuclear transport of the viral transcriptional activator VP16 during the early phase of infection. Therefore, participates indirectly in the regulation of the immediate-early gene expression. Additionally, seems to be important for efficient nuclear targeting of capsids. In Equus caballus (Horse), this protein is Tegument protein UL14 homolog.